A 762-amino-acid chain; its full sequence is PHD finger protein 20-like protein 1 (762 aa).

Tudor domains lie at 11–71 (ITFE…LERP) and 85–141 (VDFK…EDAK). 5 disordered regions span residues 178–231 (AKNK…TSSD), 289–359 (AEKK…CIKP), 383–411 (SVINKTSPSQPLNSPRSYKHSQRRRRSQR), 536–559 (SLKLPKGSSKKKRSSTSVSSEGTE), and 613–651 (LSGKKKEKEKEKKEKKEKDHKSKQKKKKKKKKKSKQHDY). Positions 193–211 (NKDKEERKWLKVPSKKEET) are enriched in basic and acidic residues. Polar residues-rich tracts occupy residues 319 to 340 (DISSSANIQKPALLSSTLSSGK) and 383 to 398 (SVINKTSPSQPLNSPR). A compositionally biased stretch (basic residues) spans 399–410 (SYKHSQRRRRSQ). Residues 614–632 (SGKKKEKEKEKKEKKEKDH) show a composition bias toward basic and acidic residues. Over residues 633–647 (KSKQKKKKKKKKKSK) the composition is skewed to basic residues.

It is found in the nucleus. Functionally, is a negative regulator of proteasomal degradation of methylated proteins. Involved in the maintainance of pluripotency of embryonic stem cells. This is PHD finger protein 20-like protein 1 (PHF20L1) from Gallus gallus (Chicken).